The sequence spans 431 residues: Tol-Pal system protein TolB (431 aa).

The first 26 residues, 1–26 (MSLMTKLGFRALVASCLITAGSAANA), serve as a signal peptide directing secretion. The tract at residues 406–431 (DGSAPPQILSVQGGSVREPSWGPFMQ) is disordered.

Belongs to the TolB family. The Tol-Pal system is composed of five core proteins: the inner membrane proteins TolA, TolQ and TolR, the periplasmic protein TolB and the outer membrane protein Pal. They form a network linking the inner and outer membranes and the peptidoglycan layer.

The protein localises to the periplasm. In terms of biological role, part of the Tol-Pal system, which plays a role in outer membrane invagination during cell division and is important for maintaining outer membrane integrity. The polypeptide is Tol-Pal system protein TolB (Burkholderia orbicola (strain MC0-3)).